A 431-amino-acid polypeptide reads, in one-letter code: Divergent protein kinase domain 1B (431 aa).

The Cytoplasmic segment spans residues Met-1 to Lys-30. Positions Arg-5–Arg-6 match the May mediate ER retention motif. Residues Tyr-31–Ser-51 traverse the membrane as a helical segment. Residues Ser-52 to Ser-431 are Lumenal-facing. Intrachain disulfides connect Cys-57–Cys-94 and Cys-62–Cys-117.

It belongs to the DIPK family. In terms of processing, among the many cysteines in the lumenal domain, most are probably involved in disulfide bonds.

The protein resides in the endoplasmic reticulum membrane. This is Divergent protein kinase domain 1B from Rattus norvegicus (Rat).